The primary structure comprises 238 residues: 3-dehydroquinate dehydratase (238 aa).

Residues 35 to 37 (ELR) and R70 each bind 3-dehydroquinate. H133 acts as the Proton donor/acceptor in catalysis. K160 functions as the Schiff-base intermediate with substrate in the catalytic mechanism. Positions 202 and 225 each coordinate 3-dehydroquinate.

It belongs to the type-I 3-dehydroquinase family. As to quaternary structure, homodimer.

It catalyses the reaction 3-dehydroquinate = 3-dehydroshikimate + H2O. The protein operates within metabolic intermediate biosynthesis; chorismate biosynthesis; chorismate from D-erythrose 4-phosphate and phosphoenolpyruvate: step 3/7. Its function is as follows. Involved in the third step of the chorismate pathway, which leads to the biosynthesis of aromatic amino acids. Catalyzes the cis-dehydration of 3-dehydroquinate (DHQ) and introduces the first double bond of the aromatic ring to yield 3-dehydroshikimate. The chain is 3-dehydroquinate dehydratase from Staphylococcus aureus (strain USA300).